We begin with the raw amino-acid sequence, 326 residues long: tRNA-dihydrouridine(20a/20b) synthase [NAD(P)+] (326 aa).

FMN is bound by residues 26 to 28 (PMV) and Q79. C108 acts as the Proton donor in catalysis. Residues K149, H177, 208–210 (NGD), and 232–233 (AR) contribute to the FMN site.

It belongs to the Dus family. Dus4 subfamily. The cofactor is FMN.

Its subcellular location is the mitochondrion. The catalysed reaction is 5,6-dihydrouridine(20a) in tRNA + NADP(+) = uridine(20a) in tRNA + NADPH + H(+). The enzyme catalyses 5,6-dihydrouridine(20a) in tRNA + NAD(+) = uridine(20a) in tRNA + NADH + H(+). It carries out the reaction 5,6-dihydrouridine(20b) in tRNA + NAD(+) = uridine(20b) in tRNA + NADH + H(+). It catalyses the reaction 5,6-dihydrouridine(20b) in tRNA + NADP(+) = uridine(20b) in tRNA + NADPH + H(+). The catalysed reaction is a 5,6-dihydrouridine in mRNA + NAD(+) = a uridine in mRNA + NADH + H(+). The enzyme catalyses a 5,6-dihydrouridine in mRNA + NADP(+) = a uridine in mRNA + NADPH + H(+). Its function is as follows. Catalyzes the synthesis of dihydrouridine, a modified base found in the D-loop of most tRNAs. Also able to mediate dihydrouridylation of some mRNAs, thereby affecting their translation. In Schizosaccharomyces pombe (strain 972 / ATCC 24843) (Fission yeast), this protein is tRNA-dihydrouridine(20a/20b) synthase [NAD(P)+].